Here is a 198-residue protein sequence, read N- to C-terminus: MEHYISLFVKAVFIENMALSFFLGMCTFLAVSKKVSPAFGLGIAVTFVLGIAVPVNQLIYANVLKENALIEGVDLSFLNFITFIGVIAGLVQILEMVLDKFMPSLYNALGIFLPLIAVNCAIFGGVSFMVQRDYNFPESIVYGFGSGLGWMLAIVALAGLTEKMKYADIPAGLKGLGITFISVGLMALGFMSFSGIQL.

6 consecutive transmembrane segments (helical) span residues 11 to 31, 35 to 55, 77 to 97, 110 to 130, 140 to 160, and 176 to 196; these read AVFIENMALSFFLGMCTFLAV, VSPAFGLGIAVTFVLGIAVPV, FLNFITFIGVIAGLVQILEMV, GIFLPLIAVNCAIFGGVSFMV, IVYGFGSGLGWMLAIVALAGL, and LGITFISVGLMALGFMSFSGI.

This sequence belongs to the NqrDE/RnfAE family. Composed of six subunits; NqrA, NqrB, NqrC, NqrD, NqrE and NqrF.

It localises to the cell inner membrane. It catalyses the reaction a ubiquinone + n Na(+)(in) + NADH + H(+) = a ubiquinol + n Na(+)(out) + NAD(+). Functionally, NQR complex catalyzes the reduction of ubiquinone-1 to ubiquinol by two successive reactions, coupled with the transport of Na(+) ions from the cytoplasm to the periplasm. NqrA to NqrE are probably involved in the second step, the conversion of ubisemiquinone to ubiquinol. This Haemophilus influenzae (strain ATCC 51907 / DSM 11121 / KW20 / Rd) protein is Na(+)-translocating NADH-quinone reductase subunit E.